A 320-amino-acid chain; its full sequence is Coproporphyrin III ferrochelatase (320 aa).

Histidine 194 and glutamate 273 together coordinate Fe(2+).

It belongs to the ferrochelatase family.

The protein localises to the cytoplasm. The enzyme catalyses Fe-coproporphyrin III + 2 H(+) = coproporphyrin III + Fe(2+). Its pathway is porphyrin-containing compound metabolism; protoheme biosynthesis. Involved in coproporphyrin-dependent heme b biosynthesis. Catalyzes the insertion of ferrous iron into coproporphyrin III to form Fe-coproporphyrin III. The protein is Coproporphyrin III ferrochelatase of Symbiobacterium thermophilum (strain DSM 24528 / JCM 14929 / IAM 14863 / T).